Here is a 181-residue protein sequence, read N- to C-terminus: Adenine phosphoribosyltransferase (181 aa).

Belongs to the purine/pyrimidine phosphoribosyltransferase family. As to quaternary structure, homodimer.

It is found in the cytoplasm. The catalysed reaction is AMP + diphosphate = 5-phospho-alpha-D-ribose 1-diphosphate + adenine. Its pathway is purine metabolism; AMP biosynthesis via salvage pathway; AMP from adenine: step 1/1. In terms of biological role, catalyzes a salvage reaction resulting in the formation of AMP, that is energically less costly than de novo synthesis. The polypeptide is Adenine phosphoribosyltransferase (Vibrio atlanticus (strain LGP32) (Vibrio splendidus (strain Mel32))).